Reading from the N-terminus, the 2052-residue chain is Unconventional myosin-X (2052 aa).

The residue at position 1 (M1) is an N-acetylmethionine. The Myosin motor domain occupies 63-739 (EGVDDMATLT…LEQKLEKRQE (677 aa)). Residues N104, Y113, 160–165 (GAGKTE), and N215 contribute to the ATP site. Positions 619 to 641 (LHSLMATLSASNPFFVRCIKPNM) are actin-binding. IQ domains lie at 742–763 (VTRAAMVIRAHVLGYLARKQYK), 764–787 (KVLDCVVIIQKNYRAFLLRRRFLH), and 788–817 (LKKAAVVFQKQLRGQIARRVYRQLLAEKRA). The SAH stretch occupies residues 814-884 (EKRAEEEKRK…LSRELEKQKE (71 aa)). The disordered stretch occupies residues 819–843 (EEKRKREEEEKRKREEEERERERER). The stretch at 885–935 (NKQVEEILRLEKEIEDLQRMKERQELSLTEASLQKLQQLRDEELRRLEDEA) forms a coiled coil. Residues S963 and S966 each carry the phosphoserine modification. The tract at residues 964–1093 (VGSGCTGEQG…DYDQDDYEDG (130 aa)) is disordered. Over residues 988-1003 (PEEEEVDEGFEADDDA) the composition is skewed to acidic residues. Positions 1040–1049 (VVPTSPSADS) are enriched in polar residues. The segment covering 1081-1092 (GDYDYDQDDYED) has biased composition (acidic residues). Position 1152 is a phosphothreonine (T1152). PH domains follow at residues 1206–1304 (EALK…QVHA) and 1386–1491 (EFIV…NVTD). Positions 1541–1689 (LPYGDINLNL…PSRDEIEALI (149 aa)) constitute a MyTH4 domain. In terms of domain architecture, FERM spans 1694–2038 (MTSTVHCHGG…AYISMIVKKR (345 aa)).

The protein belongs to the TRAFAC class myosin-kinesin ATPase superfamily. Myosin family. As to quaternary structure, monomer, when in an inactive conformation in the cytosol. Homodimer in its active, membrane-bound conformation; antiparallel coiled coil-mediated dimer formation. Interacts with ECPAS. Interacts with NEO 1. Interacts with VASP. Interacts with DCC and ITGB5; the presence of DCC inhibits ITGB5 binding. Interacts with tubulin; ITGB5 or DCC binding inhibits tubulin binding. Interacts strongly with CALM3 and weakly with CALM, the CALM3 interaction is essential for function in filopodial extension and motility. Interacts with ITGB1, ITGB3 and ITGB5. As to expression, detected in kidney, testis, liver, kidney, cerebellum and brain cortex (at protein level).

The protein localises to the cytoplasm. It is found in the cytosol. The protein resides in the cell projection. Its subcellular location is the lamellipodium. It localises to the ruffle. The protein localises to the cytoskeleton. It is found in the filopodium tip. The protein resides in the cell cortex. Its subcellular location is the filopodium membrane. Its function is as follows. Myosins are actin-based motor molecules with ATPase activity. Unconventional myosins serve in intracellular movements. MYO10 binds to actin filaments and actin bundles and functions as a plus end-directed motor. Moves with higher velocity and takes larger steps on actin bundles than on single actin filaments. The tail domain binds to membranous compartments containing phosphatidylinositol 3,4,5-trisphosphate, which are then moved relative to actin filaments. Regulates cell shape, cell spreading and cell adhesion. Stimulates the formation and elongation of filopodia. In hippocampal neurons it induces the formation of dendritic filopodia by trafficking the actin-remodeling protein VASP to the tips of filopodia, where it promotes actin elongation. Plays a role in formation of the podosome belt in osteoclasts. The polypeptide is Unconventional myosin-X (MYO10) (Bos taurus (Bovine)).